The sequence spans 281 residues: Bis(5'-nucleosyl)-tetraphosphatase, symmetrical (281 aa).

It belongs to the Ap4A hydrolase family.

It catalyses the reaction P(1),P(4)-bis(5'-adenosyl) tetraphosphate + H2O = 2 ADP + 2 H(+). In terms of biological role, hydrolyzes diadenosine 5',5'''-P1,P4-tetraphosphate to yield ADP. This chain is Bis(5'-nucleosyl)-tetraphosphatase, symmetrical, found in Acidovorax sp. (strain JS42).